Reading from the N-terminus, the 176-residue chain is Inner membrane-spanning protein YciB (176 aa).

5 helical membrane-spanning segments follow: residues 22–42 (IYYA…YTWL), 50–70 (VALI…YYHN), 81–101 (IYSL…KPLI), 121–141 (IAWA…AFWL), and 149–169 (FKVF…GIYI).

The protein belongs to the YciB family.

Its subcellular location is the cell inner membrane. Its function is as follows. Plays a role in cell envelope biogenesis, maintenance of cell envelope integrity and membrane homeostasis. The chain is Inner membrane-spanning protein YciB from Sodalis glossinidius (strain morsitans).